The following is a 505-amino-acid chain: MEEFQGYLELDRSRQHYLLYPLLFREYIYAFAHDHGLNRSILFQNAGYDNKSSSIXXXXXXXXXXXXXXXXXXXXXXXQNQFFGHNKNLYSQILSEGFAVIVEIPFSLRFLFSLERKEIAKSYNLRSIHSIFSFLEDKFTHLDYVSDVLIPYHIHLEILVQTLRYWVKDASSLHLLRFFLHNYWNSFITPKKHITFFLKGNPRLFLFLYNSHICEYEYIFLFLRNQSSRLRSTSSGIFFERIHFYVKIEHFHFVKVFFDNNFQCILWFLKDPFMHYVRYQGKFFMASKDTPLLMNKWKCYLVNLWQYHFSVWFQPGRIDINQLCKYSLDFLGYRSSVRLNSSVVRSQMLENLFLINNAMKKFETIVPIIPLIGSLYKSNFCNTFGHPISKPSRTDSSDSDIIDRFLRICRNLSHYHSGSSKKKSLXRVKYILRLSCVKTLARKHKMTVRTFVKRLGSEFFEEFLTEEEVVFSLIFPRTYSTSRRLYRGQIWYLDITSINDLVNYE.

Belongs to the intron maturase 2 family. MatK subfamily.

It localises to the plastid. The protein localises to the chloroplast. Its function is as follows. Usually encoded in the trnK tRNA gene intron. Probably assists in splicing its own and other chloroplast group II introns. The polypeptide is Maturase K (Kunzea capitata (Pink kunzea)).